A 665-amino-acid polypeptide reads, in one-letter code: Long chain acyl-CoA synthetase 2 (665 aa).

228 to 239 (IMYTSGTTGEPK) is a binding site for ATP. The segment at 496 to 520 (DGWFHTGDIGEWQEDGSMKIIDRKK) is fatty acid-binding.

The protein belongs to the ATP-dependent AMP-binding enzyme family. Mg(2+) serves as cofactor. As to expression, expressed along the entire length of the stem, but expression was not entirely epidermal specific, with some expression found in internal cell layers as well. Was expressed in leave epidermal cells, flowers (sepals, petals, stamens, filaments and carpel), siliques and developing seeds. In roots, expression was detected in an internal cell layer, probably the endodermal layer.

Its subcellular location is the endoplasmic reticulum. The enzyme catalyses a long-chain fatty acid + ATP + CoA = a long-chain fatty acyl-CoA + AMP + diphosphate. It participates in lipid metabolism; fatty acid metabolism. Functionally, activation of long-chain fatty acids for both synthesis of cellular lipids, and degradation via beta-oxidation. Acts in the cutin pathway. Preferentially uses palmitate, palmitoleate, oleate and linoleate. Required for repression of lateral root formation through its role in cutin biosynthesis and subsequent aerial tissues permeability. This is Long chain acyl-CoA synthetase 2 (LACS2) from Arabidopsis thaliana (Mouse-ear cress).